Here is a 406-residue protein sequence, read N- to C-terminus: Tryptophan synthase beta chain (406 aa).

Residue Lys-99 is modified to N6-(pyridoxal phosphate)lysine.

Belongs to the TrpB family. Tetramer of two alpha and two beta chains. Pyridoxal 5'-phosphate serves as cofactor.

The catalysed reaction is (1S,2R)-1-C-(indol-3-yl)glycerol 3-phosphate + L-serine = D-glyceraldehyde 3-phosphate + L-tryptophan + H2O. It functions in the pathway amino-acid biosynthesis; L-tryptophan biosynthesis; L-tryptophan from chorismate: step 5/5. The beta subunit is responsible for the synthesis of L-tryptophan from indole and L-serine. This is Tryptophan synthase beta chain from Rhizobium johnstonii (strain DSM 114642 / LMG 32736 / 3841) (Rhizobium leguminosarum bv. viciae).